We begin with the raw amino-acid sequence, 463 residues long: MYGNYSHFMKFPTGFGGSPGHTGSTSMSPSVALPTGKPMDSHPSYTDTPVSAPRTLSAVGTPLNALGSPYRVITSAMGPPSGALAAPPGINLVVPPSSQLNVVNSVSSSEDIKPLPGLPGIGNMNYPSTSPGSLVKHICAICGDRSSGKHYGVYSCEGCKGFFKRTIRKDLIYTCRDNKDCLIDKRQRNRCQYCRYQKCLVMGMKREAVQEERQRSRERAESEAECASTGHEDMPVERILEAELAVEPKTESYGDMSVESSTNDPVTNICHAADKQLFTLVEWAKRIPHFSDLTLEDQVILLRAGWNELLIASFSHRSVSVQDGILLATGLHVHRSSAHSAGVGSIFDRVLTELVSKMKDMRMDKSELGCLRAIVLFNPDAKGLSNPSEVETLREKVYATLEAYTKQKYPEQPGRFAKLLLRLPALRSIGLKCLEHLFFFKLIGDTPIDTFLMEMLETPLQIT.

The tract at residues 1–138 (MYGNYSHFMK…TSPGSLVKHI (138 aa)) is modulating. The interval 16–53 (GGSPGHTGSTSMSPSVALPTGKPMDSHPSYTDTPVSAP) is disordered. 2 consecutive NR C4-type zinc fingers follow at residues 139–159 (CAIC…CEGC) and 175–199 (CRDN…YQKC). Residues 139–204 (CAICGDRSSG…RYQKCLVMGM (66 aa)) constitute a DNA-binding region (nuclear receptor). The hinge stretch occupies residues 205 to 230 (KREAVQEERQRSRERAESEAECASTG). In terms of domain architecture, NR LBD spans 231–459 (HEDMPVERIL…TFLMEMLETP (229 aa)).

The protein belongs to the nuclear hormone receptor family. NR2 subfamily. In terms of assembly, homodimer. Heterodimer with a RAR molecule. Binds DNA preferentially as a RAR/RXR heterodimer. Interacts with RARA. Acetylated by EP300. As to expression, expressed in the liver, but not detected in the adrenal gland (at protein level). Restricted expression in adrenal gland, kidney, liver, brain and lungs. Strong expression in heart and muscles.

Its subcellular location is the nucleus. It is found in the cytoplasm. In terms of biological role, receptor for retinoic acid. Retinoic acid receptors bind as heterodimers to their target response elements in response to their ligands, all-trans or 9-cis retinoic acid, and regulate gene expression in various biological processes. The RAR/RXR heterodimers bind to the retinoic acid response elements (RARE) composed of tandem 5'-AGGTCA-3' sites known as DR1-DR5. The high affinity ligand for RXRs is 9-cis retinoic acid. This Rattus norvegicus (Rat) protein is Retinoic acid receptor RXR-gamma (Rxrg).